The chain runs to 580 residues: Fumarate hydratase class I, aerobic (580 aa).

The [4Fe-4S] cluster site is built by C105, C224, and C318.

This sequence belongs to the class-I fumarase family. Homodimer. The cofactor is [4Fe-4S] cluster.

It carries out the reaction (S)-malate = fumarate + H2O. The enzyme catalyses oxaloacetate = enol-oxaloacetate. It functions in the pathway carbohydrate metabolism; tricarboxylic acid cycle; (S)-malate from fumarate: step 1/1. Its function is as follows. Catalyzes the reversible hydration of fumarate to (S)-malate. Functions as an aerobic enzyme in the direction of malate formation as part of the citric acid cycle. Accounts for about 80% of the fumarase activity when the bacteria grow aerobically. To a lesser extent, also displays D-tartrate dehydratase activity in vitro, but is not able to convert (R)-malate, L-tartrate or meso-tartrate. Can also catalyze the isomerization of enol- to keto-oxaloacetate. This chain is Fumarate hydratase class I, aerobic, found in Salmonella typhimurium (strain LT2 / SGSC1412 / ATCC 700720).